Reading from the N-terminus, the 236-residue chain is Small ribosomal subunit protein uS2c (236 aa).

Belongs to the universal ribosomal protein uS2 family.

Its subcellular location is the plastid. It localises to the chloroplast. This is Small ribosomal subunit protein uS2c (rps2) from Daucus carota (Wild carrot).